Here is an 89-residue protein sequence, read N- to C-terminus: MAHKKAGGSSRNGRDSAGRRLGVKKFGGESVIGGNIIIRQRGTKVYAGRNVGMGKDHTLFATAEGRVVFHKGKLGRSYVSVDALPLAAE.

Residues 1–20 (MAHKKAGGSSRNGRDSAGRR) form a disordered region.

The protein belongs to the bacterial ribosomal protein bL27 family.

The sequence is that of Large ribosomal subunit protein bL27 from Zymomonas mobilis subsp. mobilis (strain ATCC 31821 / ZM4 / CP4).